Here is a 676-residue protein sequence, read N- to C-terminus: Pescadillo homolog (676 aa).

Residues 298–327 (IAAMADDEDEQEVEMAEADAEDDDEEENTE) adopt a coiled-coil conformation. Disordered stretches follow at residues 298–338 (IAAM…TAPD), 413–439 (PLAN…STKP), 478–502 (VKPK…EAEA), and 515–676 (EVDD…AERA). Residues 302–327 (ADDEDEQEVEMAEADAEDDDEEENTE) are compositionally biased toward acidic residues. One can recognise a BRCT domain in the interval 351-466 (EIASLFAPFT…KLLRPDLYAP (116 aa)). Residues 415–427 (ANGASAAGAEDAA) are compositionally biased toward low complexity. Acidic residues-rich tracts occupy residues 515 to 524 (EVDDDEDMDA), 539 to 557 (DVAD…DAEG), and 565 to 577 (FDDE…DISE). Positions 568 to 676 (ESEAESDISE…EKAKAAAERA (109 aa)) form a coiled coil. 4 stretches are compositionally biased toward basic and acidic residues: residues 579 to 608 (EAAR…KKEQ), 620 to 631 (KRAEEEERDRQK), 643 to 659 (KRIE…SENL), and 666 to 676 (LEKAKAAAERA).

This sequence belongs to the pescadillo family. In terms of assembly, component of the NOP7 complex, composed of ERB1, NOP7 and YTM1. The complex is held together by ERB1, which interacts with NOP7 via its N-terminal domain and with YTM1 via a high-affinity interaction between the seven-bladed beta-propeller domains of the 2 proteins. The NOP7 complex associates with the 66S pre-ribosome.

The protein resides in the nucleus. It localises to the nucleolus. Its subcellular location is the nucleoplasm. In terms of biological role, component of the NOP7 complex, which is required for maturation of the 25S and 5.8S ribosomal RNAs and formation of the 60S ribosome. This is Pescadillo homolog from Phaeosphaeria nodorum (strain SN15 / ATCC MYA-4574 / FGSC 10173) (Glume blotch fungus).